The chain runs to 324 residues: PGR5-like protein 1A, chloroplastic (324 aa).

Residues 1–60 (MGSKMLFSLTSPRLFSAVSRKPSSSFSPSPPSPSSRTQWTQLSPGKSISLRRRVFLLPAK) constitute a chloroplast transit peptide. The tract at residues 16 to 42 (SAVSRKPSSSFSPSPPSPSSRTQWTQL) is disordered. Residues 61-198 (ATTEQSGPVG…KVYSDLAVDY (138 aa)) lie on the Stromal side of the membrane. C82 and C183 form a disulfide bridge. A helical membrane pass occupies residues 199–219 (FKMLLLNVPATVVALGLFFFL). At 220-236 (DDITGFEITYIMELPEP) the chain is on the lumenal, thylakoid side. The chain crosses the membrane as a helical span at residues 237–257 (YSFIFTWFAAVPVIVYLALSI). At 258-324 (TKLIIKDFLI…LITLPEGSQA (67 aa)) the chain is on the stromal side.

The protein belongs to the PGR5 family. In terms of assembly, homodimer and heterodimer with PGR5. Interacts with PGR5, FD2, petC, psaD1, LFNR1 and LFNR2. Also interacts with a Fe-containing cofactor (FCC). In terms of processing, disulfide bonds; Cys-300 and Cys-303 are probably involved in the formation of disulfide bridges with 'Cys-11' and 'Cys-105' of PGR5 while Cys-272 and Cys-275 are probably involved in the binding of a Fe-containing cofactor (FCC).

The protein resides in the plastid. Its subcellular location is the chloroplast thylakoid membrane. With respect to regulation, inhibited by antimycin A. In terms of biological role, ferredoxin-plastoquinone reductase involved in cyclic electron flow (CEF) around photosystem I. The homodimer is probably not involved in CEF. In Arabidopsis thaliana (Mouse-ear cress), this protein is PGR5-like protein 1A, chloroplastic (PGRL1A).